The primary structure comprises 97 residues: Small ribosomal subunit protein bS6 (97 aa).

The protein belongs to the bacterial ribosomal protein bS6 family.

Its function is as follows. Binds together with bS18 to 16S ribosomal RNA. This Limosilactobacillus fermentum (strain NBRC 3956 / LMG 18251) (Lactobacillus fermentum) protein is Small ribosomal subunit protein bS6.